We begin with the raw amino-acid sequence, 185 residues long: Peptidyl-tRNA hydrolase (185 aa).

Position 14 (Tyr14) interacts with tRNA. His19 functions as the Proton acceptor in the catalytic mechanism. 3 residues coordinate tRNA: Tyr65, Asn67, and Asn113.

This sequence belongs to the PTH family. Monomer.

The protein resides in the cytoplasm. The catalysed reaction is an N-acyl-L-alpha-aminoacyl-tRNA + H2O = an N-acyl-L-amino acid + a tRNA + H(+). In terms of biological role, hydrolyzes ribosome-free peptidyl-tRNAs (with 1 or more amino acids incorporated), which drop off the ribosome during protein synthesis, or as a result of ribosome stalling. Catalyzes the release of premature peptidyl moieties from peptidyl-tRNA molecules trapped in stalled 50S ribosomal subunits, and thus maintains levels of free tRNAs and 50S ribosomes. The polypeptide is Peptidyl-tRNA hydrolase (Rickettsia africae (strain ESF-5)).